The primary structure comprises 433 residues: Inositol hexakisphosphate kinase 1 (433 aa).

Residues 100-160 (ETVEQDDTPE…SPKVELHSHS (61 aa)) are disordered. The segment covering 113–123 (PRRKHSRRSLH) has biased composition (basic residues). Over residues 139 to 149 (SFETSESSQET) the composition is skewed to polar residues. The segment covering 150 to 160 (KSPKVELHSHS) has biased composition (basic and acidic residues). Position 151 is a phosphoserine (Ser151). 220-228 (PCVLDLKMG) is a binding site for substrate. The tract at residues 362–383 (PLCGPSTSPSNTSLEAGPSSPP) is disordered. Residues 366 to 375 (PSTSPSNTSL) are compositionally biased toward polar residues.

The protein belongs to the inositol phosphokinase (IPK) family.

It is found in the cytoplasm. Its subcellular location is the nucleus. It catalyses the reaction 1D-myo-inositol hexakisphosphate + ATP = 5-diphospho-1D-myo-inositol 1,2,3,4,6-pentakisphosphate + ADP. The enzyme catalyses 1-diphospho-1D-myo-inositol 2,3,4,5,6-pentakisphosphate + ATP + H(+) = 1,5-bis(diphospho)-1D-myo-inositol 2,3,4,6-tetrakisphosphate + ADP. Its function is as follows. Converts inositol hexakisphosphate (InsP6) to diphosphoinositol pentakisphosphate (InsP7/PP-InsP5). Converts 1,3,4,5,6-pentakisphosphate (InsP5) to PP-InsP4. This Rattus norvegicus (Rat) protein is Inositol hexakisphosphate kinase 1 (Ip6k1).